An 80-amino-acid chain; its full sequence is Saposin-B-Val (80 aa).

Positions 1–80 (GDVCQDCIQM…CGLVGFCEEV (80 aa)) constitute a Saposin B-type domain. 3 disulfide bridges follow: Cys-4–Cys-77, Cys-7–Cys-71, and Cys-36–Cys-47. Asn-21 is a glycosylation site (N-linked (GlcNAc...) (complex) asparagine).

In terms of assembly, saposin-B is a homodimer. Interacts with GRN; facilitates lysosomal delivery of progranulin from the extracellular space and the biosynthetic pathway. In terms of processing, the one residue extended Saposin-B-Val is only found in a minority of the chains.

In terms of biological role, saposin-B stimulates the hydrolysis of galacto-cerebroside sulfate by arylsulfatase A (EC 3.1.6.8), GM1 gangliosides by beta-galactosidase (EC 3.2.1.23) and globotriaosylceramide by alpha-galactosidase A (EC 3.2.1.22). Saposin-B forms a solubilizing complex with the substrates of the sphingolipid hydrolases. This Sus scrofa (Pig) protein is Saposin-B-Val (PSAP).